Here is a 288-residue protein sequence, read N- to C-terminus: Transposase for insertion sequence element IS1106 (288 aa).

Belongs to the transposase 11 family.

Its function is as follows. Involved in the transposition of the insertion sequence. In Neisseria meningitidis serogroup B, this protein is Transposase for insertion sequence element IS1106.